The primary structure comprises 278 residues: 4-deoxy-L-threo-5-hexosulose-uronate ketol-isomerase (278 aa).

Zn(2+) contacts are provided by H196, H198, E203, and H245.

Belongs to the KduI family. It depends on Zn(2+) as a cofactor.

The enzyme catalyses 5-dehydro-4-deoxy-D-glucuronate = 3-deoxy-D-glycero-2,5-hexodiulosonate. The protein operates within glycan metabolism; pectin degradation; 2-dehydro-3-deoxy-D-gluconate from pectin: step 4/5. Its function is as follows. Catalyzes the isomerization of 5-dehydro-4-deoxy-D-glucuronate to 3-deoxy-D-glycero-2,5-hexodiulosonate. The protein is 4-deoxy-L-threo-5-hexosulose-uronate ketol-isomerase of Salmonella heidelberg (strain SL476).